A 723-amino-acid chain; its full sequence is ABC transporter F family member 4 (723 aa).

Residues M1–E117 form a disordered region. A compositionally biased stretch (basic and acidic residues) spans S18–L31. The span at G50 to T65 shows a compositional bias: polar residues. The span at P72–E84 shows a compositional bias: acidic residues. Residues K95–E117 are compositionally biased toward basic and acidic residues. The ABC transporter 1 domain occupies I163 to D423. G195–S202 serves as a coordination point for ATP. 2 disordered regions span residues L256–D275 and K427–A472. Residues E266–D275 show a composition bias toward acidic residues. The segment covering Q437–K446 has biased composition (basic and acidic residues). An ABC transporter 2 domain is found at L496 to V721. G530 to S537 is a binding site for ATP.

It belongs to the ABC transporter superfamily. ABCF family. EF3 (TC 3.A.1.121) subfamily.

In Arabidopsis thaliana (Mouse-ear cress), this protein is ABC transporter F family member 4 (ABCF4).